The chain runs to 296 residues: Nitrogenase iron protein 2 (296 aa).

11–18 (GKGGIGKS) is a binding site for ATP. C99 contributes to the [4Fe-4S] cluster binding site. An ADP-ribosylarginine; by dinitrogenase reductase ADP-ribosyltransferase modification is found at R102. Position 133 (C133) interacts with [4Fe-4S] cluster.

This sequence belongs to the NifH/BchL/ChlL family. In terms of assembly, homodimer. [4Fe-4S] cluster is required as a cofactor. The reversible ADP-ribosylation of Arg-102 inactivates the nitrogenase reductase and regulates nitrogenase activity.

It carries out the reaction N2 + 8 reduced [2Fe-2S]-[ferredoxin] + 16 ATP + 16 H2O = H2 + 8 oxidized [2Fe-2S]-[ferredoxin] + 2 NH4(+) + 16 ADP + 16 phosphate + 6 H(+). Functionally, the key enzymatic reactions in nitrogen fixation are catalyzed by the nitrogenase complex, which has 2 components: the iron protein and the molybdenum-iron protein. The polypeptide is Nitrogenase iron protein 2 (nifH2) (Azorhizobium caulinodans (strain ATCC 43989 / DSM 5975 / JCM 20966 / LMG 6465 / NBRC 14845 / NCIMB 13405 / ORS 571)).